Reading from the N-terminus, the 408-residue chain is uncharacterized protein (408 aa).

Residues 56–76 traverse the membrane as a helical segment; it reads YWAGPAAASMVAAVTPYVAWL.

It belongs to the mycobacterial PPE family.

The protein resides in the cell membrane. This is an uncharacterized protein from Mycobacterium bovis (strain ATCC BAA-935 / AF2122/97).